Consider the following 295-residue polypeptide: Ribosomal protein L11 methyltransferase (295 aa).

Positions 146, 167, 189, and 231 each coordinate S-adenosyl-L-methionine.

This sequence belongs to the methyltransferase superfamily. PrmA family.

The protein resides in the cytoplasm. The catalysed reaction is L-lysyl-[protein] + 3 S-adenosyl-L-methionine = N(6),N(6),N(6)-trimethyl-L-lysyl-[protein] + 3 S-adenosyl-L-homocysteine + 3 H(+). Functionally, methylates ribosomal protein L11. The protein is Ribosomal protein L11 methyltransferase of Vibrio parahaemolyticus serotype O3:K6 (strain RIMD 2210633).